A 229-amino-acid polypeptide reads, in one-letter code: Putative N-acetylmannosamine-6-phosphate 2-epimerase (229 aa).

It belongs to the NanE family.

The enzyme catalyses an N-acyl-D-glucosamine 6-phosphate = an N-acyl-D-mannosamine 6-phosphate. It functions in the pathway amino-sugar metabolism; N-acetylneuraminate degradation; D-fructose 6-phosphate from N-acetylneuraminate: step 3/5. Its function is as follows. Converts N-acetylmannosamine-6-phosphate (ManNAc-6-P) to N-acetylglucosamine-6-phosphate (GlcNAc-6-P). The polypeptide is Putative N-acetylmannosamine-6-phosphate 2-epimerase (Shigella sonnei (strain Ss046)).